Consider the following 345-residue polypeptide: Phosphoribosylformylglycinamidine cyclo-ligase (345 aa).

It belongs to the AIR synthase family.

It is found in the cytoplasm. It carries out the reaction 2-formamido-N(1)-(5-O-phospho-beta-D-ribosyl)acetamidine + ATP = 5-amino-1-(5-phospho-beta-D-ribosyl)imidazole + ADP + phosphate + H(+). It functions in the pathway purine metabolism; IMP biosynthesis via de novo pathway; 5-amino-1-(5-phospho-D-ribosyl)imidazole from N(2)-formyl-N(1)-(5-phospho-D-ribosyl)glycinamide: step 2/2. This chain is Phosphoribosylformylglycinamidine cyclo-ligase, found in Shewanella oneidensis (strain ATCC 700550 / JCM 31522 / CIP 106686 / LMG 19005 / NCIMB 14063 / MR-1).